The primary structure comprises 174 residues: ATP-dependent protease subunit HslV (174 aa).

Thr-2 is a catalytic residue. Gly-157, Cys-160, and Thr-163 together coordinate Na(+).

Belongs to the peptidase T1B family. HslV subfamily. As to quaternary structure, a double ring-shaped homohexamer of HslV is capped on each side by a ring-shaped HslU homohexamer. The assembly of the HslU/HslV complex is dependent on binding of ATP.

Its subcellular location is the cytoplasm. The catalysed reaction is ATP-dependent cleavage of peptide bonds with broad specificity.. With respect to regulation, allosterically activated by HslU binding. In terms of biological role, protease subunit of a proteasome-like degradation complex believed to be a general protein degrading machinery. This chain is ATP-dependent protease subunit HslV, found in Shewanella putrefaciens (strain CN-32 / ATCC BAA-453).